Here is a 395-residue protein sequence, read N- to C-terminus: Altered inheritance of mitochondria protein 39, mitochondrial (395 aa).

A helical transmembrane segment spans residues 156–176; the sequence is QIWSAIFGGIFGVILGYSLIY.

This sequence belongs to the AIM39 family.

The protein localises to the mitochondrion membrane. The sequence is that of Altered inheritance of mitochondria protein 39, mitochondrial (AIM39) from Saccharomyces cerevisiae (strain JAY291) (Baker's yeast).